The chain runs to 191 residues: MTGFDRARIEAAVAEILAAVGEDPSRPGLSATPSRVADAYAEFFAGLGRDAEAELGEPVPLEQGQAETVILREISFRSVCEHHLLPFIGVAHVAYLPGEAVIGLGRIPRVIDTLAARPQVQERLTEQIADTFEAGAGARGVLVVLSAEHGCVTARGPRQVAATTVTLAARGEFAEPAARAELIALIGCGAA.

3 residues coordinate Zn(2+): Cys-80, His-83, and Cys-151.

Belongs to the GTP cyclohydrolase I family. As to quaternary structure, toroid-shaped homodecamer, composed of two pentamers of five dimers.

The catalysed reaction is GTP + H2O = 7,8-dihydroneopterin 3'-triphosphate + formate + H(+). It functions in the pathway cofactor biosynthesis; 7,8-dihydroneopterin triphosphate biosynthesis; 7,8-dihydroneopterin triphosphate from GTP: step 1/1. This is GTP cyclohydrolase 1 from Leifsonia xyli subsp. xyli (strain CTCB07).